The chain runs to 244 residues: 3-deoxy-manno-octulosonate cytidylyltransferase (244 aa).

This sequence belongs to the KdsB family.

It localises to the cytoplasm. The enzyme catalyses 3-deoxy-alpha-D-manno-oct-2-ulosonate + CTP = CMP-3-deoxy-beta-D-manno-octulosonate + diphosphate. The protein operates within nucleotide-sugar biosynthesis; CMP-3-deoxy-D-manno-octulosonate biosynthesis; CMP-3-deoxy-D-manno-octulosonate from 3-deoxy-D-manno-octulosonate and CTP: step 1/1. It participates in bacterial outer membrane biogenesis; lipopolysaccharide biosynthesis. Functionally, activates KDO (a required 8-carbon sugar) for incorporation into bacterial lipopolysaccharide in Gram-negative bacteria. The protein is 3-deoxy-manno-octulosonate cytidylyltransferase of Flavobacterium johnsoniae (strain ATCC 17061 / DSM 2064 / JCM 8514 / BCRC 14874 / CCUG 350202 / NBRC 14942 / NCIMB 11054 / UW101) (Cytophaga johnsonae).